Here is a 442-residue protein sequence, read N- to C-terminus: Chromosomal replication initiator protein DnaA (442 aa).

The interval 1-68 is domain I, interacts with DnaA modulators; that stretch reads MDAWPRCLER…ELLAYFVGNG (68 aa). The segment at 68 to 104 is domain II; it reads GDVALAVGSRPRAPEPAPAPVAVPSAPQAAPIVPFAG. Residues 105 to 322 are domain III, AAA+ region; the sequence is NLDSHYTFAN…GALNTLVARA (218 aa). 4 residues coordinate ATP: glycine 150, glycine 152, lysine 153, and threonine 154. Positions 323-442 are domain IV, binds dsDNA; sequence NFTGRSITVE…WEKLIRKLSE (120 aa).

It belongs to the DnaA family. In terms of assembly, oligomerizes as a right-handed, spiral filament on DNA at oriC.

Its subcellular location is the cytoplasm. Functionally, plays an essential role in the initiation and regulation of chromosomal replication. ATP-DnaA binds to the origin of replication (oriC) to initiate formation of the DNA replication initiation complex once per cell cycle. Binds the DnaA box (a 9 base pair repeat at the origin) and separates the double-stranded (ds)DNA. Forms a right-handed helical filament on oriC DNA; dsDNA binds to the exterior of the filament while single-stranded (ss)DNA is stabiized in the filament's interior. The ATP-DnaA-oriC complex binds and stabilizes one strand of the AT-rich DNA unwinding element (DUE), permitting loading of DNA polymerase. After initiation quickly degrades to an ADP-DnaA complex that is not apt for DNA replication. Binds acidic phospholipids. This is Chromosomal replication initiator protein DnaA from Xanthomonas axonopodis pv. citri (strain 306).